The primary structure comprises 380 residues: Cytochrome b (380 aa).

The next 4 membrane-spanning stretches (helical) occupy residues 34-54 (FGSL…LLAM), 78-99 (WLIR…YLHI), 114-134 (WNTG…GYVL), and 179-199 (FFAL…IHLT). His84 and His98 together coordinate heme b. Residues His183 and His197 each contribute to the heme b site. An a ubiquinone-binding site is contributed by His202. A run of 4 helical transmembrane segments spans residues 227–247 (LKDI…ALFS), 289–309 (LGGV…PFLH), 321–341 (LSQL…WVGS), and 348–368 (FIII…ILFP).

Belongs to the cytochrome b family. The cytochrome bc1 complex contains 11 subunits: 3 respiratory subunits (MT-CYB, CYC1 and UQCRFS1), 2 core proteins (UQCRC1 and UQCRC2) and 6 low-molecular weight proteins (UQCRH/QCR6, UQCRB/QCR7, UQCRQ/QCR8, UQCR10/QCR9, UQCR11/QCR10 and a cleavage product of UQCRFS1). This cytochrome bc1 complex then forms a dimer. Heme b serves as cofactor.

The protein resides in the mitochondrion inner membrane. Component of the ubiquinol-cytochrome c reductase complex (complex III or cytochrome b-c1 complex) that is part of the mitochondrial respiratory chain. The b-c1 complex mediates electron transfer from ubiquinol to cytochrome c. Contributes to the generation of a proton gradient across the mitochondrial membrane that is then used for ATP synthesis. The polypeptide is Cytochrome b (MT-CYB) (Pterodroma hypoleuca (Bonin petrel)).